We begin with the raw amino-acid sequence, 562 residues long: Serine/threonine-protein kinase dst3 (562 aa).

Residues Phe-23–Ile-285 enclose the Protein kinase domain. ATP contacts are provided by residues Val-29–Val-37 and Lys-59. Asp-154 (proton acceptor) is an active-site residue. Disordered regions lie at residues Leu-316 to Ser-339 and Ser-366 to Ile-562. Residues Gln-322–Ser-339 show a composition bias toward polar residues. Low complexity-rich tracts occupy residues Asn-421–Thr-431, Gln-442–Lys-454, and Thr-476–Thr-494. Residues Gly-495–Ser-522 are compositionally biased toward polar residues. The span at Glu-542–Ile-562 shows a compositional bias: acidic residues.

Belongs to the protein kinase superfamily. STE Ser/Thr protein kinase family. STE20 subfamily. Mg(2+) serves as cofactor.

The enzyme catalyses L-seryl-[protein] + ATP = O-phospho-L-seryl-[protein] + ADP + H(+). The catalysed reaction is L-threonyl-[protein] + ATP = O-phospho-L-threonyl-[protein] + ADP + H(+). The protein is Serine/threonine-protein kinase dst3 of Dictyostelium discoideum (Social amoeba).